Reading from the N-terminus, the 475-residue chain is Aspartyl/glutamyl-tRNA(Asn/Gln) amidotransferase subunit B (475 aa).

Belongs to the GatB/GatE family. GatB subfamily. Heterotrimer of A, B and C subunits.

The catalysed reaction is L-glutamyl-tRNA(Gln) + L-glutamine + ATP + H2O = L-glutaminyl-tRNA(Gln) + L-glutamate + ADP + phosphate + H(+). It catalyses the reaction L-aspartyl-tRNA(Asn) + L-glutamine + ATP + H2O = L-asparaginyl-tRNA(Asn) + L-glutamate + ADP + phosphate + 2 H(+). Allows the formation of correctly charged Asn-tRNA(Asn) or Gln-tRNA(Gln) through the transamidation of misacylated Asp-tRNA(Asn) or Glu-tRNA(Gln) in organisms which lack either or both of asparaginyl-tRNA or glutaminyl-tRNA synthetases. The reaction takes place in the presence of glutamine and ATP through an activated phospho-Asp-tRNA(Asn) or phospho-Glu-tRNA(Gln). This Bacillus cereus (strain G9842) protein is Aspartyl/glutamyl-tRNA(Asn/Gln) amidotransferase subunit B.